The chain runs to 992 residues: RNA-binding motif protein, X-linked-like-3 (992 aa).

The RRM domain occupies 8-86 (EKLFVGGLNL…KAIMVAQTIK (79 aa)). Disordered regions lie at residues 91 to 130 (SSRW…PDDG), 144 to 169 (APMP…DPGD), 188 to 207 (PDYC…GRDH), 278 to 385 (DHLP…DSSS), 397 to 511 (EEYQ…HRYR), 562 to 588 (SLDA…SHRY), and 644 to 992 (NSGG…QSRY). Low complexity predominate over residues 284–296 (YSGGRSSSSNSYS). Basic and acidic residues predominate over residues 297-316 (RSDRYGEEGCYEEYRGRSPD). Over residues 318 to 334 (HSGGRNSSSNSYGQSHH) the composition is skewed to low complexity. Residues 335–371 (YGGEGRYEEYRGRYEEYRGRSHEARSGGRSTDAHSGG) are compositionally biased toward basic and acidic residues. Over residues 454–471 (THSGGRSSSSNSYGQSHR) the composition is skewed to low complexity. A compositionally biased stretch (basic and acidic residues) spans 472–488 (YGGEGHYEYRGRSHDAH). Polar residues-rich tracts occupy residues 564 to 574 (DANSGGRSPNA), 644 to 664 (NSGG…SQSH), and 752 to 774 (DANS…SNSY). Positions 785 to 798 (HYEEYRGRSHDTHS) are enriched in basic and acidic residues. Polar residues predominate over residues 818–828 (GRNSFSNSYGQ). Basic and acidic residues-rich tracts occupy residues 831 to 842 (HYGRGGRYEEYQ), 920 to 948 (SGDH…RPDR), and 981 to 992 (GRFERGEGQSRY).

This is RNA-binding motif protein, X-linked-like-3 (RBMXL3) from Pan troglodytes (Chimpanzee).